Reading from the N-terminus, the 166-residue chain is Large ribosomal subunit protein uL10 (166 aa).

This sequence belongs to the universal ribosomal protein uL10 family. In terms of assembly, part of the ribosomal stalk of the 50S ribosomal subunit. The N-terminus interacts with L11 and the large rRNA to form the base of the stalk. The C-terminus forms an elongated spine to which L12 dimers bind in a sequential fashion forming a multimeric L10(L12)X complex.

Its function is as follows. Forms part of the ribosomal stalk, playing a central role in the interaction of the ribosome with GTP-bound translation factors. The protein is Large ribosomal subunit protein uL10 of Pseudomonas fluorescens (strain Pf0-1).